A 337-amino-acid polypeptide reads, in one-letter code: Adenosine deaminase-like protein (337 aa).

2 residues coordinate Zn(2+): histidine 14 and histidine 16. N(6)-methyl-AMP contacts are provided by residues histidine 16, asparagine 18, histidine 66, 98–101, and glycine 171; that span reads TTPK. Histidine 198 contributes to the Zn(2+) binding site. Residues glutamate 201, aspartate 276, and aspartate 277 each coordinate N(6)-methyl-AMP. Glutamate 201 functions as the Proton donor in the catalytic mechanism. Aspartate 276 lines the Zn(2+) pocket.

Belongs to the metallo-dependent hydrolases superfamily. Adenosine and AMP deaminases family. As to quaternary structure, monomer. Requires Zn(2+) as cofactor.

The enzyme catalyses N(6)-methyl-AMP + H2O + H(+) = IMP + methylamine. Functionally, catalyzes the hydrolysis of the free cytosolic methylated adenosine nucleotide N(6)-methyl-AMP (N6-mAMP) to produce inositol monophosphate (IMP) and methylamine. Is required for the catabolism of cytosolic N6-mAMP, which is derived from the degradation of mRNA containing N6-methylated adenine (m6A). This is Adenosine deaminase-like protein (Ada) from Drosophila melanogaster (Fruit fly).